Reading from the N-terminus, the 569-residue chain is MSFSMSRRQYADMFGPTTGDCIRLADTDLWIEIEHDYTVYGDEVKFGGGKVIRDGMGQHPLATRDEAVDLVLTNAVIVDYTGIYKADIGIKDGNIAAIGKAGNPLLMDGVNIVIGASTEVIAAEGKIVTAGGVDAHIHFICPQQIETALSSGITTMIGGGTGPATGTNATTCTPGEWNIYRMLEAAEAFPMNIGFLGKGNASAKEPIAEQVRAGAIGLKLHEDWGTTAAAIDACLRVADEYDVQVAIHTDTLNEGGFVEHTLKAINGRVIHTYHTEGAGGGHAPDIMKVASFPNILPSSTNPTRPYTKNTLDEHLDMLMVCHHLDPSVPEDIAFADSRIRKETIAAEDILHDIGAFSMISSDSQAMGRVGEVILRTWQTADKMKKQFGRLPEETGRGDNVRVKRYVAKYTINPAITHGIAEYVGSVEVGKFADLVVWHPAFFGVKPELVIKGGMIAYSVMGDPNASIPTPQPALYRPMFASYGAAIAKTSITFLSKAAFERGIPDKLGLHKIVKPVGNIRSLTKNDMVFNNAMLQIDVDPQTYEVKVDGRLITCEPAEVVAMAQRYFLF.

The 439-residue stretch at 131–569 (GGVDAHIHFI…VAMAQRYFLF (439 aa)) folds into the Urease domain. His136, His138, and Lys219 together coordinate Ni(2+). An N6-carboxylysine modification is found at Lys219. Residue His221 participates in substrate binding. Ni(2+)-binding residues include His248 and His274. His322 functions as the Proton donor in the catalytic mechanism. Position 362 (Asp362) interacts with Ni(2+).

The protein belongs to the metallo-dependent hydrolases superfamily. Urease alpha subunit family. Heterotrimer of UreA (gamma), UreB (beta) and UreC (alpha) subunits. Three heterotrimers associate to form the active enzyme. The cofactor is Ni cation. In terms of processing, carboxylation allows a single lysine to coordinate two nickel ions.

It localises to the cytoplasm. It carries out the reaction urea + 2 H2O + H(+) = hydrogencarbonate + 2 NH4(+). It participates in nitrogen metabolism; urea degradation; CO(2) and NH(3) from urea (urease route): step 1/1. The protein is Urease subunit alpha of Geobacillus kaustophilus (strain HTA426).